A 498-amino-acid chain; its full sequence is Capsanthin/capsorubin synthase, chromoplastic (498 aa).

Residues 1–52 (METLLKPFPSPLLSIPTPNMYSFKHNSTFPNPTKQKDSRKFHYRNKSSTHFC) constitute a chromoplast transit peptide. 84 to 112 (VIIIGTGPAGLRLAEQVSKYGIKVCCVDP) is a binding site for NAD(+). Positions 293-297 (FLEET) match the FLEET motif motif.

Belongs to the lycopene cyclase family. Monomer. FAD serves as cofactor. It depends on NADPH as a cofactor.

Its subcellular location is the plastid. It is found in the chromoplast. It catalyses the reaction all-trans-violaxanthin = all-trans-capsorubin. The catalysed reaction is all-trans-antheraxanthin = all-trans-capsanthin. The enzyme catalyses all-trans-violaxanthin = (5R,6S)-5,6-epoxi-capsanthin. It carries out the reaction (5R,6S)-5,6-epoxi-capsanthin = all-trans-capsorubin. It participates in carotenoid biosynthesis; capsanthin biosynthesis; capsanthin from antheraxanthin: step 1/1. The protein operates within carotenoid biosynthesis; capsorubin biosynthesis; capsorubin from violaxanthin: step 1/1. Catalyzes the conversion of the ubiquitous 5,6-epoxycarotenoids, antheraxanthin and violaxanthin, into capsanthin and capsorubin, respectively. This is Capsanthin/capsorubin synthase, chromoplastic from Capsicum annuum (Capsicum pepper).